Here is a 299-residue protein sequence, read N- to C-terminus: Taste receptor type 2 member 50 (299 aa).

M1 is a topological domain (extracellular). Residues 2–22 (ITFLYIFFSILIMVLFVLGNF) traverse the membrane as a helical segment. Residues 23-55 (ANGFIALVNFIDWVKRKKISSADQILTALAVSR) lie on the Cytoplasmic side of the membrane. A helical membrane pass occupies residues 56-76 (IGLLWTLLLNWYLTVLNPAFY). The Extracellular segment spans residues 77-87 (SVELRITSYNA). Residues 88–108 (WVVTNHFSMWLAASLSIFYLL) form a helical membrane-spanning segment. At 109–126 (KIANFSNLIFLHLKRRVR) the chain is on the cytoplasmic side. The helical transmembrane segment at 127–147 (SVILVILLGTLIFLVCHLLVA) threads the bilayer. The Extracellular portion of the chain corresponds to 148-181 (NMDESMWAEEYEGNITGKMKLRNTVHLSYLTVTT). N161 carries an N-linked (GlcNAc...) asparagine glycan. Residues 182 to 202 (LWSFIPFTLSLISFLMLICSL) traverse the membrane as a helical segment. Residues 203-229 (CKHLKKMQLHGEGSQDLSTKVHIKALQ) lie on the Cytoplasmic side of the membrane. A helical membrane pass occupies residues 230 to 250 (TLISFLLLCAIFFLFLIISVW). Residues 251–259 (SPRRLRNDP) are Extracellular-facing. A helical transmembrane segment spans residues 260-280 (VVMVSKAVGNIYLAFDSFILI). The Cytoplasmic portion of the chain corresponds to 281-299 (WRTKKLKHTFLLILCQIRC).

It belongs to the G-protein coupled receptor T2R family.

It localises to the membrane. Receptor that may play a role in the perception of bitterness and is gustducin-linked. May play a role in sensing the chemical composition of the gastrointestinal content. The activity of this receptor may stimulate alpha gustducin, mediate PLC-beta-2 activation and lead to the gating of TRPM5. This Pan paniscus (Pygmy chimpanzee) protein is Taste receptor type 2 member 50 (TAS2R50).